Here is a 166-residue protein sequence, read N- to C-terminus: UPF0336 protein ML2425 (166 aa).

In terms of domain architecture, MaoC-like spans 10–131 (LIGKHYRQLD…VIAEVRSEVT (122 aa)).

This sequence belongs to the UPF0336 family.

The chain is UPF0336 protein ML2425 from Mycobacterium leprae (strain TN).